The following is a 1002-amino-acid chain: Lon protease homolog, mitochondrial (1002 aa).

Positions 102-313 constitute a Lon N-terminal domain; that stretch reads VIALPLPHRP…LTLELVKKEM (212 aa). 468–475 provides a ligand contact to ATP; sequence GPPGVGKT. A Lon proteolytic domain is found at 811–995; it reads QTPVGVVMGL…NEIFDIAFQS (185 aa). Active-site residues include Ser-901 and Lys-944.

This sequence belongs to the peptidase S16 family. In terms of assembly, homohexamer or homoheptamer. Organized in a ring with a central cavity.

The protein localises to the mitochondrion matrix. It catalyses the reaction Hydrolysis of proteins in presence of ATP.. ATP-dependent serine protease that mediates the selective degradation of misfolded, unassembled or oxidatively damaged polypeptides as well as certain short-lived regulatory proteins in the mitochondrial matrix. May also have a chaperone function in the assembly of inner membrane protein complexes. Participates in the regulation of mitochondrial gene expression and in the maintenance of the integrity of the mitochondrial genome. Binds to mitochondrial DNA in a site-specific manner. This Oryza sativa subsp. indica (Rice) protein is Lon protease homolog, mitochondrial.